A 44-amino-acid polypeptide reads, in one-letter code: Protein PsbN (44 aa).

Residues 6–26 form a helical membrane-spanning segment; the sequence is FFFTIFLWCLLLSVTGYSVYV.

Belongs to the PsbN family.

It is found in the plastid. It localises to the chloroplast thylakoid membrane. In terms of biological role, may play a role in photosystem I and II biogenesis. The protein is Protein PsbN of Oltmannsiellopsis viridis (Marine flagellate).